Consider the following 299-residue polypeptide: tRNA dimethylallyltransferase (299 aa).

Residue 10 to 17 (GPTAVGKT) participates in ATP binding. 12 to 17 (TAVGKT) is a substrate binding site. Residues 35 to 38 (DSQQ) are interaction with substrate tRNA.

This sequence belongs to the IPP transferase family. Monomer. The cofactor is Mg(2+).

The catalysed reaction is adenosine(37) in tRNA + dimethylallyl diphosphate = N(6)-dimethylallyladenosine(37) in tRNA + diphosphate. Functionally, catalyzes the transfer of a dimethylallyl group onto the adenine at position 37 in tRNAs that read codons beginning with uridine, leading to the formation of N6-(dimethylallyl)adenosine (i(6)A). The sequence is that of tRNA dimethylallyltransferase from Streptococcus thermophilus (strain ATCC BAA-250 / LMG 18311).